The following is a 1025-amino-acid chain: DNA polymerase (1025 aa).

This sequence belongs to the DNA polymerase type-B family.

It catalyses the reaction DNA(n) + a 2'-deoxyribonucleoside 5'-triphosphate = DNA(n+1) + diphosphate. Its function is as follows. Replicates the viral genome. Host DNA polymerases cannot substitute for the viral enzyme in this process. The polypeptide is DNA polymerase (Noctuidae (owlet moths)).